Consider the following 870-residue polypeptide: LPS-assembly protein LptD (870 aa).

An N-terminal signal peptide occupies residues 1-25; it reads MKQGKSFIFYCLVLLLCGFQQLSSA.

Belongs to the LptD family. In terms of assembly, component of the lipopolysaccharide transport and assembly complex. Interacts with LptE and LptA.

It localises to the cell outer membrane. Together with LptE, is involved in the assembly of lipopolysaccharide (LPS) at the surface of the outer membrane. The polypeptide is LPS-assembly protein LptD (Coxiella burnetii (strain RSA 493 / Nine Mile phase I)).